The chain runs to 217 residues: Protein-L-isoaspartate O-methyltransferase (217 aa).

Residue S65 is part of the active site.

This sequence belongs to the methyltransferase superfamily. L-isoaspartyl/D-aspartyl protein methyltransferase family.

Its subcellular location is the cytoplasm. It carries out the reaction [protein]-L-isoaspartate + S-adenosyl-L-methionine = [protein]-L-isoaspartate alpha-methyl ester + S-adenosyl-L-homocysteine. Its function is as follows. Catalyzes the methyl esterification of L-isoaspartyl residues in peptides and proteins that result from spontaneous decomposition of normal L-aspartyl and L-asparaginyl residues. It plays a role in the repair and/or degradation of damaged proteins. The protein is Protein-L-isoaspartate O-methyltransferase of Chlorobium limicola (strain DSM 245 / NBRC 103803 / 6330).